Consider the following 1367-residue polypeptide: Flocculation protein FLO11 (1367 aa).

A signal peptide spans 1–21 (MQRPFLLAYLVLSLLFNSALG). Residues 31–207 (SSEGTSCNSI…NIDCDNNCGG (177 aa)) form the Flo11 domain. 3 cysteine pairs are disulfide-bonded: cysteine 37/cysteine 201, cysteine 44/cysteine 179, and cysteine 141/cysteine 205. Low complexity predominate over residues 209-267 (KSSTTTSSTSESSTTTSSTSESSTTTSSTSESSTTTSSTSESSTSSSTTAPATPTTTSC). 2 disordered regions span residues 209–975 (KSST…TTSV) and 1008–1032 (TTTV…PTTP). 45 repeat units span residues 210–219 (SSTTTSSTSE), 220–229 (SSTTTSSTSE), 230–239 (SSTTTSSTSE), 240–249 (SSTTTSSTSE), 262–274 (PTTT…KPTP), 275–287 (PTTT…KPTP), 313–327 (PVPT…SSSA), 328–342 (PVPT…SSSA), 343–354 (PVTSSTTESSSA), 355–369 (PVPT…SSSA), 370–381 (PVTSSTTESSSA), 382–393 (PVTSSTTESSSA), 394–408 (PVPT…SSSA), 409–420 (PVTSSTTESSSA), 421–432 (PVTSSTTESSSA), 433–444 (PVTSSTTESSSA), 445–456 (PVTSSTTESSSA), 457–471 (PVPT…SSSA), 472–483 (PVTSSTTESSSA), 484–498 (PVPT…SSSA), 499–510 (PVTSSTTESSSA), 511–525 (PVPT…SSSA), 526–540 (PAPT…SSSA), 541–552 (PVTSSTTESSSA), 568–579 (PVTSSTTESSSA), 580–594 (PVPT…SSSA), 595–609 (PVPT…SSSA), 610–624 (PAPT…SSSA), 625–636 (PVTSSTTESSSA), 637–651 (PVPT…SSSA), 652–666 (PVPT…SSSA), 667–681 (PVPT…SSSA), 682–693 (PVTSSTTESSSA), 694–705 (PVTSSTTESSSA), 706–720 (PVPT…SSSA), 721–735 (PVPT…SSSA), 736–750 (PVPT…SSSA), 751–762 (PVTSSTTESSSA), 763–777 (PVPT…SSSA), 778–792 (PVPT…SSSA), 808–822 (PVPT…TSSA), 838–852 (PVPT…SSSA), 865–879 (PVPT…TSSA), 937–968 (TTIT…TTVP), and 981–1012 (TTIT…TTVP). Positions 210 to 249 (SSTTTSSTSESSTTTSSTSESSTTTSSTSESSTTTSSTSE) are 4 X 10 AA repeats, Ser/Thr-rich. Positions 262 to 287 (PTTTSCTKEKPTPPTTTSCTKEKPTP) are 2 X 13 AA repeats, Thr-rich. Basic and acidic residues predominate over residues 281 to 292 (TKEKPTPPHHDT). Low complexity-rich tracts occupy residues 302-900 (TSKT…TVTP) and 910-948 (TETS…STGT). The tract at residues 313–852 (PVPTPSSSTT…SSSTTESSSA (540 aa)) is 22 X 15 AA approximate repeats, Ser-rich. Residues 343–762 (PVTSSTTESS…TSSTTESSSA (420 aa)) are 15 X 12 AA repeats, Ser/Thr-rich. The N-linked (GlcNAc...) asparagine glycan is linked to asparagine 817. A glycan (N-linked (GlcNAc...) asparagine) is linked at asparagine 874. The interval 937 to 1119 (TTITTTVCST…SPKTVTTTVP (183 aa)) is 3 X 32 AA tandem repeats, Thr-rich. The segment covering 949–961 (NSAGETTSGCSPK) has biased composition (polar residues). The span at 962–975 (TVTTTVPTTTTTSV) shows a compositional bias: low complexity. Low complexity predominate over residues 1014-1032 (STSPSETASESTTTSPTTP). The 5-3 repeat unit spans residues 1088 to 1119 (TTITTTVCSTGTNSAGETTSGCSPKTVTTTVP). A lipid anchor (GPI-anchor amidated glycine) is attached at glycine 1346. Residues 1347 to 1367 (AANIKVLGNFMWLLLALPVVF) constitute a propeptide, removed in mature form.

This sequence belongs to the flocculin family. Highly divergent. In terms of processing, extensively O-mannosylated. Post-translationally, the GPI-anchor is attached to the protein in the endoplasmic reticulum and serves to target the protein to the cell surface. There, the glucosamine-inositol phospholipid moiety is cleaved off and the GPI-modified mannoprotein is covalently attached via its lipidless GPI glycan remnant to the 1,6-beta-glucan of the outer cell wall layer. A soluble form is probably produced by proteolytic cleavage at the cell surface (shedding).

It localises to the secreted. The protein localises to the cell wall. It is found in the membrane. Functionally, homophilic binding protein that enables kin discrimination in heterogeneous yeast populations by mediating homotypic cell-cell interactions during flocculation, a reversible and asexual process in which cells adhere to form aggregates (flocs). Plays a role in cell-substrate adhesion, haploid invasive growth, diploid pseudohyphae formation and biofilm (flor) development. Adhesive activity is inhibited by mannose, but not by glucose, maltose, sucrose or galactose. The chain is Flocculation protein FLO11 from Saccharomyces cerevisiae (strain ATCC 204508 / S288c) (Baker's yeast).